The following is a 204-amino-acid chain: UPF0637 protein lwe1043 (204 aa).

The protein belongs to the UPF0637 family.

The chain is UPF0637 protein lwe1043 from Listeria welshimeri serovar 6b (strain ATCC 35897 / DSM 20650 / CCUG 15529 / CIP 8149 / NCTC 11857 / SLCC 5334 / V8).